Reading from the N-terminus, the 104-residue chain is uncharacterized protein (104 aa).

The next 2 membrane-spanning stretches (helical) occupy residues 16–36 (LAFF…LASY) and 44–64 (GGFG…FLCI).

Its subcellular location is the cell membrane. This is an uncharacterized protein from Bacillus anthracis.